The primary structure comprises 409 residues: uncharacterized protein (409 aa).

12 helical membrane-spanning segments follow: residues 3–23 (IIVK…PTTE), 43–63 (ITQI…LSLG), 73–93 (PIVL…IFSV), 95–115 (IEML…GSVI), 135–155 (ILSP…GYII), 162–182 (YVFV…YKIL), 209–229 (ILWL…GFFI), 248–268 (KLAF…GYLI), 283–303 (FIFS…LEFI), 309–329 (LAIS…SLLI), 346–366 (TAGS…TYCV), and 379–399 (LLCL…CILY).

Belongs to the major facilitator superfamily. Bcr/CmlA family.

The protein localises to the cell inner membrane. This is an uncharacterized protein from Rickettsia typhi (strain ATCC VR-144 / Wilmington).